Consider the following 227-residue polypeptide: ATP-dependent dethiobiotin synthetase BioD (227 aa).

ATP is bound at residue 13–18; sequence DVGKTV. Threonine 17 is a binding site for Mg(2+). Lysine 38 is an active-site residue. Residues aspartate 55, 116–119, and 176–177 each bind ATP; these read EGAG and NR. The Mg(2+) site is built by aspartate 55 and glutamate 116.

Belongs to the dethiobiotin synthetase family. Homodimer. It depends on Mg(2+) as a cofactor.

The protein resides in the cytoplasm. The enzyme catalyses (7R,8S)-7,8-diammoniononanoate + CO2 + ATP = (4R,5S)-dethiobiotin + ADP + phosphate + 3 H(+). The protein operates within cofactor biosynthesis; biotin biosynthesis; biotin from 7,8-diaminononanoate: step 1/2. In terms of biological role, catalyzes a mechanistically unusual reaction, the ATP-dependent insertion of CO2 between the N7 and N8 nitrogen atoms of 7,8-diaminopelargonic acid (DAPA, also called 7,8-diammoniononanoate) to form a ureido ring. The chain is ATP-dependent dethiobiotin synthetase BioD from Aliivibrio salmonicida (strain LFI1238) (Vibrio salmonicida (strain LFI1238)).